Here is an 87-residue protein sequence, read N- to C-terminus: MANLSTLITIALLLCATMLTCSARPEPAYFASFTTSPADTLSLEMIESKLHEVAGESCDKEDDEDCLVRRTLTAHLDYIYTHKNNHH.

The first 23 residues, 1–23 (MANLSTLITIALLLCATMLTCSA), serve as a signal peptide directing secretion. Positions 24-77 (RPEPAYFASFTTSPADTLSLEMIESKLHEVAGESCDKEDDEDCLVRRTLTAHLD) are excised as a propeptide. A sulfotyrosine mark is found at Tyr-78 and Tyr-80. A propeptide spanning residues 83-87 (KNNHH) is cleaved from the precursor.

This sequence belongs to the phytosulfokine family. In terms of processing, sulfation is important for activity and for the binding to a putative membrane receptor.

The protein localises to the secreted. Promotes plant cell differentiation, organogenesis and somatic embryogenesis as well as cell proliferation. The protein is Putative phytosulfokines 4 (PSK4) of Arabidopsis thaliana (Mouse-ear cress).